The primary structure comprises 173 residues: Succinate dehydrogenase assembly factor 3, mitochondrial (173 aa).

Residues 1–59 (MFRPSTSLALRSTLRQLASASNQPIPPGSEINAVKRTVATILPPIRLYRRIIRAHRRLD) constitute a mitochondrion transit peptide. Positions 149–173 (FPPEKQRELAEKAAADAGLSVKKDE) are disordered. The span at 152 to 162 (EKQRELAEKAA) shows a compositional bias: basic and acidic residues.

Belongs to the complex I LYR family. SDHAF3 subfamily. Interacts with the iron-sulfur protein subunit within the SDH catalytic dimer.

The protein localises to the mitochondrion matrix. Its function is as follows. Plays an essential role in the assembly of succinate dehydrogenase (SDH), an enzyme complex (also referred to as respiratory complex II) that is a component of both the tricarboxylic acid (TCA) cycle and the mitochondrial electron transport chain, and which couples the oxidation of succinate to fumarate with the reduction of ubiquinone (coenzyme Q) to ubiquinol. Promotes maturation of the iron-sulfur protein subunit of the SDH catalytic dimer, protecting it from the deleterious effects of oxidants. May act together with SDHAF1. The protein is Succinate dehydrogenase assembly factor 3, mitochondrial of Mycosarcoma maydis (Corn smut fungus).